Here is a 136-residue protein sequence, read N- to C-terminus: MARTKQTARKSTGGKAPRKQLATKAARKSAPSTGGVKKPHRYRPGTVALREIRRYQKSTELLIRKLPFQRLAREIAQDFKTDLRFQSAAIGALQEASEAYLVGLFEDTNLCAIHAKRVTIMPKDIQLARRIRGERA.

Positions M1–R43 are disordered. R3 is modified (asymmetric dimethylarginine; by PRMT6; alternate). Citrulline; alternate is present on R3. The residue at position 4 (T4) is a Phosphothreonine; by HASPIN and VRK1. The residue at position 5 (K5) is an Allysine; alternate. N6,N6,N6-trimethyllysine; alternate is present on K5. K5 carries the N6,N6-dimethyllysine; alternate modification. N6-(2-hydroxyisobutyryl)lysine; alternate is present on K5. N6-(beta-hydroxybutyryl)lysine; alternate is present on K5. Position 5 is an N6-acetyllysine; alternate (K5). The residue at position 5 (K5) is an N6-crotonyllysine; alternate. K5 bears the N6-methyllysine; alternate mark. Q6 bears the 5-glutamyl dopamine; alternate mark. Q6 is modified (5-glutamyl serotonin; alternate). Position 7 is a phosphothreonine; by PKC (T7). R9 carries the citrulline; alternate modification. Symmetric dimethylarginine; by PRMT5; alternate is present on R9. K10 is subject to N6,N6,N6-trimethyllysine; alternate. At K10 the chain carries N6,N6-dimethyllysine; alternate. At K10 the chain carries N6-(2-hydroxyisobutyryl)lysine; alternate. Position 10 is an N6-(beta-hydroxybutyryl)lysine; alternate (K10). K10 is modified (N6-acetyllysine; alternate). K10 is subject to N6-crotonyllysine; alternate. An N6-methyllysine; alternate modification is found at K10. At K10 the chain carries N6-lactoyllysine; alternate. The residue at position 11 (S11) is an ADP-ribosylserine; alternate. S11 carries the post-translational modification Phosphoserine; alternate; by AURKB, AURKC, RPS6KA3, RPS6KA4 and RPS6KA5. T12 bears the Phosphothreonine; by PKC mark. An N6-(2-hydroxyisobutyryl)lysine; alternate modification is found at K15. The residue at position 15 (K15) is an N6-(beta-hydroxybutyryl)lysine; alternate. K15 carries the N6-acetyllysine; alternate modification. K15 carries the post-translational modification N6-lactoyllysine; alternate. An N6-glutaryllysine; alternate modification is found at K15. The residue at position 15 (K15) is an N6-succinyllysine; alternate. Residue R18 is modified to Citrulline; alternate. R18 bears the Asymmetric dimethylarginine; by CARM1; alternate mark. N6-(2-hydroxyisobutyryl)lysine; alternate is present on residues K19 and K24. N6-(beta-hydroxybutyryl)lysine; alternate is present on residues K19 and K24. An N6-acetyllysine; alternate mark is found at K19 and K24. An N6-crotonyllysine; alternate mark is found at K19 and K24. An N6-methyllysine; alternate mark is found at K19 and K24. An N6-lactoyllysine; alternate mark is found at K19 and K24. N6-glutaryllysine; alternate occurs at positions 19 and 24. N6-butyryllysine; alternate is present on residues K19 and K24. K19 carries N6-decanoyllysine lipidation. R27 carries the post-translational modification Citrulline. The residue at position 28 (K28) is an N6,N6,N6-trimethyllysine; alternate. N6,N6-dimethyllysine; alternate is present on K28. N6-(2-hydroxyisobutyryl)lysine; alternate is present on K28. K28 carries the N6-acetyllysine; alternate modification. K28 is modified (N6-crotonyllysine; alternate). The residue at position 28 (K28) is an N6-methyllysine; alternate. K28 bears the N6-lactoyllysine; alternate mark. At K28 the chain carries N6-glutaryllysine; alternate. S29 carries the post-translational modification ADP-ribosylserine; alternate. S29 carries the phosphoserine; alternate; by AURKB, AURKC and RPS6KA5 modification. The residue at position 32 (S32) is a Phosphoserine. At K37 the chain carries N6,N6,N6-trimethyllysine; alternate. At K37 the chain carries N6,N6-dimethyllysine; alternate. Position 37 is an N6-(2-hydroxyisobutyryl)lysine; alternate (K37). At K37 the chain carries N6-acetyllysine; alternate. K37 is modified (N6-methyllysine; alternate). Residue K38 is modified to N6-methyllysine. Phosphotyrosine is present on Y42. Position 57 is an N6,N6,N6-trimethyllysine; alternate (K57). The residue at position 57 (K57) is an N6-(2-hydroxyisobutyryl)lysine; alternate. The residue at position 57 (K57) is an N6-(beta-hydroxybutyryl)lysine; alternate. Residue K57 is modified to N6-acetyllysine; alternate. At K57 the chain carries N6-crotonyllysine; alternate. K57 bears the N6-lactoyllysine; alternate mark. K57 is modified (N6-glutaryllysine; alternate). Position 57 is an N6-succinyllysine; alternate (K57). Position 57 is an N6-methyllysine; by EHMT2; alternate (K57). Position 58 is a phosphoserine (S58). 2 positions are modified to N6-(2-hydroxyisobutyryl)lysine; alternate: K65 and K80. Residues K65 and K80 each carry the N6-methyllysine; alternate modification. An N6,N6,N6-trimethyllysine; alternate modification is found at K80. K80 is modified (N6,N6-dimethyllysine; alternate). K80 carries the post-translational modification N6-acetyllysine; alternate. Position 80 is an N6-lactoyllysine; alternate (K80). K80 carries the post-translational modification N6-glutaryllysine; alternate. K80 carries the post-translational modification N6-succinyllysine; alternate. T81 carries the phosphothreonine modification. The residue at position 87 (S87) is a Phosphoserine. Residue T108 is modified to Phosphothreonine. N6-acetyllysine; alternate is present on residues K116 and K123. N6-glutaryllysine; alternate is present on residues K116 and K123. The residue at position 123 (K123) is an N6-(2-hydroxyisobutyryl)lysine; alternate. Residue K123 is modified to N6-methyllysine; alternate. N6-succinyllysine; alternate is present on K123.

This sequence belongs to the histone H3 family. As to quaternary structure, the nucleosome is a histone octamer containing two molecules each of H2A, H2B, H3 and H4 assembled in one H3-H4 heterotetramer and two H2A-H2B heterodimers. The octamer wraps approximately 147 bp of DNA. Interacts with HIRA, a chaperone required for its incorporation into nucleosomes. Interacts with ZMYND11; when trimethylated at 'Lys-36' (H3.3K36me3). Found in a co-chaperone complex with DNJC9, MCM2 and histone H3.3-H4 dimers. Within the complex, interacts with DNJC9 (via C-terminus); the interaction is direct. Interacts with ASF1A, MCM2, NASP and SPT2. Interacts with DAXX; the interaction is direct. Interacts with NASP; NASP is a histone chaperone that stabilizes and maintains a soluble pool of Histone H3-H4 dimers. Acetylation is generally linked to gene activation. Acetylation on Lys-10 (H3K9ac) impairs methylation at Arg-9 (H3R8me2s). Acetylation on Lys-19 (H3K18ac) and Lys-24 (H3K24ac) favors methylation at Arg-18 (H3R17me). Acetylation at Lys-123 (H3K122ac) by EP300/p300 plays a central role in chromatin structure: localizes at the surface of the histone octamer and stimulates transcription, possibly by promoting nucleosome instability. Post-translationally, citrullination at Arg-9 (H3R8ci) and/or Arg-18 (H3R17ci) by PADI4 impairs methylation and represses transcription. In terms of processing, asymmetric dimethylation at Arg-18 (H3R17me2a) by CARM1 is linked to gene activation. Symmetric dimethylation at Arg-9 (H3R8me2s) by PRMT5 is linked to gene repression. Asymmetric dimethylation at Arg-3 (H3R2me2a) by PRMT6 is linked to gene repression and is mutually exclusive with H3 Lys-5 methylation (H3K4me2 and H3K4me3). H3R2me2a is present at the 3' of genes regardless of their transcription state and is enriched on inactive promoters, while it is absent on active promoters. Specifically enriched in modifications associated with active chromatin such as methylation at Lys-5 (H3K4me), Lys-37 and Lys-80. Methylation at Lys-5 (H3K4me) facilitates subsequent acetylation of H3 and H4. Methylation at Lys-80 (H3K79me) is associated with DNA double-strand break (DSB) responses and is a specific target for TP53BP1. Methylation at Lys-10 (H3K9me) and Lys-28 (H3K27me), which are linked to gene repression, are underrepresented. Methylation at Lys-10 (H3K9me) is a specific target for HP1 proteins (CBX1, CBX3 and CBX5) and prevents subsequent phosphorylation at Ser-11 (H3S10ph) and acetylation of H3 and H4. Methylation at Lys-5 (H3K4me) and Lys-80 (H3K79me) require preliminary monoubiquitination of H2B at 'Lys-120'. Methylation at Lys-10 (H3K9me) and Lys-28 (H3K27me) are enriched in inactive X chromosome chromatin. Monomethylation at Lys-57 (H3K56me1) by EHMT2/G9A in G1 phase promotes interaction with PCNA and is required for DNA replication. Post-translationally, phosphorylated at Thr-4 (H3T3ph) by VRK1. Phosphorylated at Thr-4 (H3T3ph) by HASPIN during prophase and dephosphorylated during anaphase. Phosphorylation at Ser-11 (H3S10ph) by AURKB is crucial for chromosome condensation and cell-cycle progression during mitosis and meiosis. In addition phosphorylation at Ser-11 (H3S10ph) by RPS6KA4 and RPS6KA5 is important during interphase because it enables the transcription of genes following external stimulation, like mitogens, stress, growth factors or UV irradiation and result in the activation of genes, such as c-fos and c-jun. Phosphorylation at Ser-11 (H3S10ph), which is linked to gene activation, prevents methylation at Lys-10 (H3K9me) but facilitates acetylation of H3 and H4. Phosphorylation at Ser-11 (H3S10ph) by AURKB mediates the dissociation of HP1 proteins (CBX1, CBX3 and CBX5) from heterochromatin. Phosphorylation at Ser-11 (H3S10ph) is also an essential regulatory mechanism for neoplastic cell transformation. Phosphorylated at Ser-29 (H3S28ph) by MAP3K20 isoform 1, RPS6KA5 or AURKB during mitosis or upon ultraviolet B irradiation. Phosphorylation at Thr-7 (H3T6ph) by PRKCB is a specific tag for epigenetic transcriptional activation that prevents demethylation of Lys-5 (H3K4me) by LSD1/KDM1A. At centromeres, specifically phosphorylated at Thr-12 (H3T11ph) from prophase to early anaphase, by DAPK3 and PKN1. Phosphorylation at Thr-12 (H3T11ph) by PKN1 or isoform M2 of PKM (PKM2) is a specific tag for epigenetic transcriptional activation that promotes demethylation of Lys-10 (H3K9me) by KDM4C/JMJD2C. Phosphorylation at Tyr-42 (H3Y41ph) by JAK2 promotes exclusion of CBX5 (HP1 alpha) from chromatin. Phosphorylation on Ser-32 (H3S31ph) is specific to regions bordering centromeres in metaphase chromosomes. In terms of processing, ubiquitinated. Monoubiquitinated by RAG1 in lymphoid cells, monoubiquitination is required for V(D)J recombination. Lysine deamination at Lys-5 (H3K4all) to form allysine is mediated by LOXL2. Allysine formation by LOXL2 only takes place on H3K4me3 and results in gene repression. Post-translationally, crotonylation (Kcr) is specifically present in male germ cells and marks testis-specific genes in post-meiotic cells, including X-linked genes that escape sex chromosome inactivation in haploid cells. Crotonylation marks active promoters and enhancers and confers resistance to transcriptional repressors. It is also associated with post-meiotically activated genes on autosomes. In terms of processing, butyrylation of histones marks active promoters and competes with histone acetylation. It is present during late spermatogenesis. Succinylation at Lys-80 (H3K79succ) by KAT2A takes place with a maximum frequency around the transcription start sites of genes. It gives a specific tag for epigenetic transcription activation. Desuccinylation at Lys-123 (H3K122succ) by SIRT7 in response to DNA damage promotes chromatin condensation and double-strand breaks (DSBs) repair. Post-translationally, serine ADP-ribosylation by PARP1 or PARP2 constitutes the primary form of ADP-ribosylation of proteins in response to DNA damage. Serine ADP-ribosylation at Ser-11 (H3S10ADPr) promotes recruitment of CHD1L. H3S10ADPr is mutually exclusive with phosphorylation at Ser-11 (H3S10ph) and impairs acetylation at Lys-10 (H3K9ac). In terms of processing, serotonylated by TGM2 at Gln-6 (H3Q5ser) during serotonergic neuron differentiation. H3Q5ser is associated with trimethylation of Lys-5 (H3K4me3) and enhances general transcription factor IID (TFIID) complex-binding to H3K4me3, thereby facilitating transcription. Dopaminylated by TGM2 at Gln-6 (H3Q5dop) in ventral tegmental area (VTA) neurons. H3Q5dop mediates neurotransmission-independent role of nuclear dopamine by regulating relapse-related transcriptional plasticity in the reward system. Post-translationally, lactylated in macrophages by EP300/P300 by using lactoyl-CoA directly derived from endogenous or exogenous lactate, leading to stimulates gene transcription.

Its subcellular location is the nucleus. It is found in the chromosome. Functionally, variant histone H3 which replaces conventional H3 in a wide range of nucleosomes in active genes. Constitutes the predominant form of histone H3 in non-dividing cells and is incorporated into chromatin independently of DNA synthesis. Deposited at sites of nucleosomal displacement throughout transcribed genes, suggesting that it represents an epigenetic imprint of transcriptionally active chromatin. Nucleosomes wrap and compact DNA into chromatin, limiting DNA accessibility to the cellular machineries which require DNA as a template. Histones thereby play a central role in transcription regulation, DNA repair, DNA replication and chromosomal stability. DNA accessibility is regulated via a complex set of post-translational modifications of histones, also called histone code, and nucleosome remodeling. The chain is Histone H3.3 from Pongo abelii (Sumatran orangutan).